We begin with the raw amino-acid sequence, 512 residues long: D-alanine--D-alanyl carrier protein ligase (512 aa).

Residue 152–153 (TS) coordinates ATP. Aspartate 199 lines the D-alanine pocket. 294–299 (NAYGPT) lines the ATP pocket. D-alanine is bound at residue valine 303. ATP-binding positions include aspartate 385, 397-400 (YGGR), and lysine 499. Position 499 (lysine 499) interacts with D-alanine.

The protein belongs to the ATP-dependent AMP-binding enzyme family. DltA subfamily.

It localises to the cytoplasm. The enzyme catalyses holo-[D-alanyl-carrier protein] + D-alanine + ATP = D-alanyl-[D-alanyl-carrier protein] + AMP + diphosphate. It participates in cell wall biogenesis; lipoteichoic acid biosynthesis. Functionally, catalyzes the first step in the D-alanylation of lipoteichoic acid (LTA), the activation of D-alanine and its transfer onto the D-alanyl carrier protein (Dcp) DltC. In an ATP-dependent two-step reaction, forms a high energy D-alanyl-AMP intermediate, followed by transfer of the D-alanyl residue as a thiol ester to the phosphopantheinyl prosthetic group of the Dcp. D-alanylation of LTA plays an important role in modulating the properties of the cell wall in Gram-positive bacteria, influencing the net charge of the cell wall. In Streptococcus pyogenes serotype M28 (strain MGAS6180), this protein is D-alanine--D-alanyl carrier protein ligase.